Here is a 402-residue protein sequence, read N- to C-terminus: MLILRKDSKFDRKSIEELKELAEVLYNPVKTIVQIRKADPKYQIGSGLVERIAENIKEENIEIVIVGNILTPSQKYNLAKKFKVEVIDKIELVLRIFYKHARTKEAQLQVRLAELQYELPRAREKVRLAKMGEQPGFGGYGDYEVEKYYQKVKREIATIKRKLEKLREHRRVARKGRAKFDTVGLIGYTNAGKTSLLNALTGENKESKNQVFTTLTTTTRAIKGIKRKILVTDTVGFIDDLPPFMIEAFLSTIEESADSDLILIVVDASDDIEEIKRKLKVNHEILSKINCKAPIITVFNKVDKITKEKKRKILEELDRYIVNPIFVSAKYDINMDLLKEMIIEHLNLSIGTIETDNPRLISYLYENTEIIEDILEDNKHIITFRAKERDVNRILKLHKSAV.

The Hflx-type G domain occupies Asp181–Ile350. GTP-binding positions include Gly187–Thr194, Phe212–Thr216, Asp233–Gly236, Asn300–Asp303, and Ser328–Lys330. Mg(2+) is bound by residues Thr194 and Thr214.

The protein belongs to the TRAFAC class OBG-HflX-like GTPase superfamily. HflX GTPase family. As to quaternary structure, monomer. Associates with the 50S ribosomal subunit. The cofactor is Mg(2+).

The protein localises to the cytoplasm. GTPase that associates with the 50S ribosomal subunit and may have a role during protein synthesis or ribosome biogenesis. This Methanocaldococcus jannaschii (strain ATCC 43067 / DSM 2661 / JAL-1 / JCM 10045 / NBRC 100440) (Methanococcus jannaschii) protein is GTPase HflX.